Consider the following 192-residue polypeptide: Iron sulfur cluster assembly protein 1, mitochondrial (192 aa).

The N-terminal 53 residues, Met-1–Met-53, are a transit peptide targeting the mitochondrion.

Belongs to the NifU family. Homodimer. Component of the core Fe-S cluster (ISC) assembly machinery. [2Fe-2S] cluster is required as a cofactor.

The protein resides in the mitochondrion. It localises to the mitochondrion matrix. Its pathway is cofactor biosynthesis; iron-sulfur cluster biosynthesis. Functionally, scaffold protein for the de novo synthesis of iron-sulfur (Fe-S) clusters within mitochondria, which is required for maturation of both mitochondrial and cytoplasmic [2Fe-2S] and [4Fe-4S] proteins. First, a [2Fe-2S] cluster is transiently assembled on the scaffold protein isu1. In a second step, the cluster is released from isu1, transferred to a glutaredoxin, followed by the formation of mitochondrial [2Fe-2S] proteins, the synthesis of [4Fe-4S] clusters and their target-specific insertion into the recipient apoproteins. Cluster assembly on isu1 depends on the function of the cysteine desulfurase complex nfs1-isd11, which serves as the sulfur donor for cluster synthesis, the iron-binding protein frataxin as the putative iron donor, and the electron transfer chain comprised of ferredoxin reductase and ferredoxin, which receive their electrons from NADH. The chain is Iron sulfur cluster assembly protein 1, mitochondrial (isu1) from Schizosaccharomyces pombe (strain 972 / ATCC 24843) (Fission yeast).